The following is a 53-amino-acid chain: Light-harvesting protein B-800/820 alpha chain (53 aa).

Over 1 to 14 the chain is Cytoplasmic; it reads MNQGKIWTVVNPAV. Residues 15 to 35 form a helical membrane-spanning segment; sequence GLPLLLGSVAITALLVHLAVL. Residue His-31 coordinates a bacteriochlorophyll. Residues 36–53 are Periplasmic-facing; that stretch reads THTTWFPAFTQGGLKKAA.

The protein belongs to the antenna complex alpha subunit family. The core complex is formed by different alpha and beta chains, binding bacteriochlorophyll molecules, and arranged most probably in tetrameric structures disposed around the reaction center. The non-pigmented gamma chains may constitute additional components.

It localises to the cell inner membrane. Antenna complexes are light-harvesting systems, which transfer the excitation energy to the reaction centers. The polypeptide is Light-harvesting protein B-800/820 alpha chain (Rhodoblastus acidophilus (Rhodopseudomonas acidophila)).